The chain runs to 221 residues: GTP-binding nuclear protein Ran/TC4 (221 aa).

The Small GTPase Ran-type domain occupies 10 to 174; sequence DYPSFKLVIV…LYLARKLAGD (165 aa). 21 to 28 contributes to the GTP binding site; it reads DGGTGKTT. A switch-I region spans residues 40–48; that stretch reads KKYEPTIGV. Residues G71, 125–128, and 153–155 each bind GTP; these read NKVD and SAK. Residues 71 to 87 are switch-II; sequence GQEKFGGLRDGYYIHGQ.

The protein belongs to the small GTPase superfamily. Ran family. As to quaternary structure, found in a nuclear export complex with RanGTP, exportin and pre-miRNA.

Its subcellular location is the nucleus. GTP-binding protein involved in nucleocytoplasmic transport. Required for the import of protein into the nucleus and also for RNA export. Involved in chromatin condensation and control of cell cycle. The protein is GTP-binding nuclear protein Ran/TC4 of Vicia faba (Broad bean).